Here is a 375-residue protein sequence, read N- to C-terminus: Tryptophan--tRNA ligase (375 aa).

The short motif at 81–89 (PSGPVHIGH) is the 'HIGH' region element. Residues 258-262 (KMSAS) carry the 'KMSKS' region motif.

This sequence belongs to the class-I aminoacyl-tRNA synthetase family.

It localises to the cytoplasm. The enzyme catalyses tRNA(Trp) + L-tryptophan + ATP = L-tryptophyl-tRNA(Trp) + AMP + diphosphate + H(+). In Pyrobaculum aerophilum (strain ATCC 51768 / DSM 7523 / JCM 9630 / CIP 104966 / NBRC 100827 / IM2), this protein is Tryptophan--tRNA ligase.